Reading from the N-terminus, the 340-residue chain is Guanine nucleotide-binding protein subunit beta-1 (340 aa).

7 WD repeats span residues 53 to 83 (GHLA…IVWD), 95 to 125 (LRSS…SIYS), 141 to 170 (GHTG…ALWD), 182 to 212 (GHTG…KLWD), 224 to 254 (GHES…RLFD), 268 to 298 (NIIC…NVWD), and 310 to 340 (GHDN…KIWN).

Belongs to the WD repeat G protein beta family. As to quaternary structure, g proteins are composed of 3 units, alpha, beta and gamma. Interacts with G protein gamma subunits gpc-1 and gpc-2 and with egl-10 and eat-16. Interacts with goa-1 (in GDP-bound form).

In terms of biological role, guanine nucleotide-binding proteins (G proteins) are involved as a modulator or transducer in various transmembrane signaling systems. The beta and gamma chains are required for the GTPase activity, for replacement of GDP by GTP, and for G protein-effector interaction. In the early embryo, controls the magnitude of the forces acting on centrosomes but is not required for generating asymmetric forces. This is Guanine nucleotide-binding protein subunit beta-1 (gpb-1) from Caenorhabditis briggsae.